The sequence spans 513 residues: Solute carrier family 2, facilitated glucose transporter member 7 (513 aa).

Residues 1-21 (MEDKEIGTPLPLPHSEARLQP) lie on the Cytoplasmic side of the membrane. A helical membrane pass occupies residues 22–42 (TLVLTTLSAAFGSVFQYGYNI). Over 43–78 (AVINTPHKVFKSFYNDTHFERHGTFMDESTLLLLWS) the chain is Extracellular. N-linked (GlcNAc...) asparagine glycosylation occurs at asparagine 57. The chain crosses the membrane as a helical span at residues 79–99 (CTVSMFPLGGLLGSLVVGLMV). Residues 100 to 107 (NKWGRKGT) lie on the Cytoplasmic side of the membrane. A helical membrane pass occupies residues 108 to 128 (LLINNVFAITSAVLMGVSKVA). Residues 129–138 (RAFELIILSR) are Extracellular-facing. The chain crosses the membrane as a helical span at residues 139–159 (VLVGICAGIAYSTLPMYLGEL). Residues 160–172 (APQNLRGALGTMT) lie on the Cytoplasmic side of the membrane. A helical transmembrane segment spans residues 173-193 (EVFVIIGVLLAQIFSLQAILG). Residues 194-198 (NATGW) are Extracellular-facing. The helical transmembrane segment at 199-219 (PILLALTGVPAVIQLLSLPFF) threads the bilayer. The Cytoplasmic segment spans residues 220-282 (PESPRYTLIE…LNLFTFRPLR (63 aa)). A helical transmembrane segment spans residues 283–303 (WQLISIVVLMAGQQLSGINAV). Residues 295–296 (QQ) and asparagine 301 each bind D-glucose. Topologically, residues 304–322 (NYYADVIYTSAGVDPTQSQ) are extracellular. The helical transmembrane segment at 323 to 343 (YVTLGSGVINLVMTLVSAVII) threads the bilayer. D-glucose is bound at residue asparagine 332. The Cytoplasmic portion of the chain corresponds to 344–351 (ERLGRRIL). A helical transmembrane segment spans residues 352 to 372 (LLSGYAICCSACLVLTVALLL). Topologically, residues 373-380 (QSTAPELS) are extracellular. Residues 381–401 (YLSIVCVFSYIVGHSIGPSPV) traverse the membrane as a helical segment. Over 402–416 (PSVVRTEIVLQSSRT) the chain is Cytoplasmic. A helical membrane pass occupies residues 417 to 437 (AAFTVDGAVHWLTNFIVGLTF). Residues 438–446 (PSIQVAIGA) are Extracellular-facing. A helical membrane pass occupies residues 447–467 (YSFLVFAGVCILTAAYIYVVI). At 468–513 (PETKGRTFVEINCAFAKRNGVEFPEEKEVATAKPHTPSLPTKETAF) the chain is on the cytoplasmic side. Positions 494-513 (KEVATAKPHTPSLPTKETAF) are disordered.

This sequence belongs to the major facilitator superfamily. Sugar transporter (TC 2.A.1.1) family. Glucose transporter subfamily.

Its subcellular location is the cell membrane. The protein resides in the apical cell membrane. The enzyme catalyses D-glucose(out) = D-glucose(in). It catalyses the reaction D-fructose(out) = D-fructose(in). Its function is as follows. Probable sugar transporter. Even if its physiological substrate is subject to discussion, it is able to transport glucose and fructose. Does not transport galactose, 2-deoxy-d-glucose and xylose. The protein is Solute carrier family 2, facilitated glucose transporter member 7 of Mus musculus (Mouse).